The sequence spans 618 residues: Prothrombin (618 aa).

A signal peptide spans 1–24 (MSHVRGLGLPGCLALAALVSLVHS). The propeptide occupies 25–43 (QHVFLAPQQALSLLQRVRR). Residues 44–90 (ANSGFLEELRKGNLERECVEEQCSYEEAFEALESPQDTDVFWAKYTV) enclose the Gla domain. Residues glutamate 50, glutamate 51, glutamate 58, glutamate 60, glutamate 63, glutamate 64, glutamate 69, glutamate 70, glutamate 73, and glutamate 76 each carry the 4-carboxyglutamate modification. A disulfide bridge links cysteine 61 with cysteine 66. 10 cysteine pairs are disulfide-bonded: cysteine 91–cysteine 104, cysteine 109–cysteine 187, cysteine 130–cysteine 170, cysteine 158–cysteine 182, cysteine 215–cysteine 293, cysteine 236–cysteine 276, cysteine 264–cysteine 288, cysteine 333–cysteine 479, cysteine 388–cysteine 404, and cysteine 533–cysteine 547. 2 Kringle domains span residues 109–187 (CAMD…VPVC) and 215–292 (CLTE…NLNY). N-linked (GlcNAc...) asparagine glycans are attached at residues asparagine 122 and asparagine 144. The Peptidase S1 domain maps to 361–615 (IVEGWDAEKG…LKRWIQKVID (255 aa)). Histidine 403 functions as the Charge relay system in the catalytic mechanism. N-linked (GlcNAc...) asparagine glycosylation occurs at asparagine 413. Aspartate 459 serves as the catalytic Charge relay system. The tract at residues 548–570 (AGFKVNDTKRGDACEGDSGGPFV) is high affinity receptor-binding region which is also known as the TP508 peptide. Asparagine 553 carries N-linked (GlcNAc...) asparagine glycosylation. An intrachain disulfide couples cysteine 561 to cysteine 591. Serine 565 serves as the catalytic Charge relay system.

It belongs to the peptidase S1 family. As to quaternary structure, heterodimer (named alpha-thrombin) of a light and a heavy chain; disulfide-linked. Forms a heterodimer with SERPINA5. In plasma, interacts (via N-terminus) with alpha-1-microglobulin; this interaction does not prevent the activation of prothrombin to thrombin. The gamma-carboxyglutamyl residues, which bind calcium ions, result from the carboxylation of glutamyl residues by a microsomal enzyme, the vitamin K-dependent carboxylase. The modified residues are necessary for the calcium-dependent interaction with a negatively charged phospholipid surface, which is essential for the conversion of prothrombin to thrombin. In terms of processing, in the penultimate step of the coagulation cascade, prothrombin is converted to thrombin by the prothrombinase complex composed of factor Xa (F10), cofactor Va (F5), and phospholipids. This activation requires factor Xa-catalyzed sequential cleavage at 2 sites, Arg-311 and Arg-360, along 2 possible pathways. In the first pathway, the first cleavage occurs at Arg-311, leading to the formation of the inactive intermediate prethrombin-2. This pathway preferentially occurs on platelets and in the absence of cofactor Va. In the second pathway, the first cleavage occurs at Arg-360, which separates protease domain into 2 chains that remain connected through a disulfide bond and generates the active intermediate meizothrombin. The presence of cofactor Va directs activation along the meizothrombin pathway and greatly accelerates the rate of cleavage at Arg-360, but has a smaller effect on the cleavage of meizothrombin at Arg-311. Meizothrombin accumulates as an intermediate when prothrombinase is assembled on the membrane of red blood cells.

The enzyme catalyses Selective cleavage of Arg-|-Gly bonds in fibrinogen to form fibrin and release fibrinopeptides A and B.. Activity is promoted in the presence of negatively charged surfaces, such as polyphosphate and dextran sulfate. Inhibited by SERPINA5. Functionally, thrombin, which cleaves bonds after Arg and Lys, converts fibrinogen to fibrin and activates factors V, VII, VIII, XIII, and, in complex with thrombomodulin, protein C. Functions in blood homeostasis, inflammation and wound healing. Activates coagulation factor XI (F11); activation is promoted by the contact with negatively charged surfaces. Triggers the production of pro-inflammatory cytokines, such as MCP-1/CCL2 and IL8/CXCL8, in endothelial cells. The polypeptide is Prothrombin (F2) (Mus musculus (Mouse)).